The following is a 286-amino-acid chain: Plasma membrane ascorbate-dependent reductase CYBRD1 (286 aa).

Over 1-7 (MAMEGYW) the chain is Cytoplasmic. A helical transmembrane segment spans residues 8–32 (RFLALLGSALLVGFLSVIFALVWVL). Residues 15–220 (SALLVGFLSV…FGALIFWIVT (206 aa)) enclose the Cytochrome b561 domain. The Extracellular segment spans residues 33-47 (HYREGLGWDGSALEF). The chain crosses the membrane as a helical span at residues 48-69 (NWHPVLMVTGFVFIQGIAIIVY). Residues His-50, Arg-70, and Lys-79 each contribute to the heme b site. The Cytoplasmic portion of the chain corresponds to 70–78 (RLPWTWKCS). Positions 79 and 83 each coordinate L-ascorbate. The chain crosses the membrane as a helical span at residues 79–105 (KLLMKSIHAGLNAVAAILAIISVVAVF). His-86 lines the heme b pocket. Over 106-118 (ENHNVNNIANMYS) the chain is Extracellular. His-108 contacts Fe(3+). Heme b-binding positions include 115-118 (NMYS) and His-120. A helical membrane pass occupies residues 119–144 (LHSWVGLIAVICYLLQLLSGFSVFLL). At 145–151 (PWAPLSL) the chain is on the cytoplasmic side. Arg-152 is an L-ascorbate binding site. A helical membrane pass occupies residues 152–179 (RAFLMPIHVYSGIVIFGTVIATALMGLT). 2 residues coordinate heme b: His-159 and Glu-180. Residues 180–197 (EKLIFSLRDPAYSTFPPE) lie on the Extracellular side of the membrane. The chain crosses the membrane as a helical span at residues 198–222 (GVFVNTLGLLILVFGALIFWIVTRP). The Cytoplasmic portion of the chain corresponds to 223 to 286 (QWKRPKEPNS…LDEAGQRSTM (64 aa)). Lys-225 serves as a coordination point for heme b. The segment at 229 to 268 (EPNSTILHPNGGTEQGARGSMPAYSGNNMDKSDSELNSEV) is disordered. Ser-232 carries the phosphoserine modification. The residue at position 285 (Thr-285) is a Phosphothreonine.

As to quaternary structure, homodimer. The cofactor is heme b. In terms of tissue distribution, present in erythrocyte membranes (at protein level). Also expressed in respiratory epithelium.

It is found in the cell membrane. Its subcellular location is the apical cell membrane. The enzyme catalyses Fe(3+)(out) + L-ascorbate(in) = monodehydro-L-ascorbate radical(in) + Fe(2+)(out) + H(+). It catalyses the reaction Cu(2+)(out) + L-ascorbate(in) = Cu(+)(out) + monodehydro-L-ascorbate radical(in) + H(+). The catalysed reaction is monodehydro-L-ascorbate radical(out) + L-ascorbate(in) = monodehydro-L-ascorbate radical(in) + L-ascorbate(out). With respect to regulation, activated by chelators like citrate, malate, and oxalate specially at alkaline pH. Plasma membrane reductase that uses cytoplasmic ascorbate as an electron donor to reduce extracellular Fe(3+) into Fe(2+). Probably functions in dietary iron absorption at the brush border of duodenal enterocytes by producing Fe(2+), the divalent form of iron that can be transported into enterocytes. It is also able to reduce extracellular monodehydro-L-ascorbate and may be involved in extracellular ascorbate regeneration by erythrocytes in blood. May also act as a ferrireductase in airway epithelial cells. May also function as a cupric transmembrane reductase. This Homo sapiens (Human) protein is Plasma membrane ascorbate-dependent reductase CYBRD1.